Here is an 864-residue protein sequence, read N- to C-terminus: Arf-GAP with GTPase, ANK repeat and PH domain-containing protein 1 (864 aa).

Residues 66–276 are small GTPase-like; the sequence is SRSVPELKVG…QTSNGGGSLS (211 aa). The GLD domain maps to 67–241; the sequence is RSVPELKVGI…TRKKQQLSIG (175 aa). GTP-binding positions include 78–85, 122–126, and 178–181; these read GNLASGKS, IRDEG, and TQDA. 3 disordered regions span residues 266–343, 405–455, and 499–549; these read SQTS…IGSG, VPGK…QMAS, and TGLG…LSST. A compositionally biased stretch (low complexity) spans 275 to 289; sequence LSDYSSSVPSTPSTS. Basic and acidic residues predominate over residues 322 to 337; the sequence is KGSDPDKDKKGLESRA. The 246-residue stretch at 346–591 folds into the PH domain; sequence IPIKQGMLLK…WVQAIESQIL (246 aa). A compositionally biased stretch (polar residues) spans 413 to 428; sequence ATSSCAPVASPKTNGL. Residues 507–517 show a composition bias toward low complexity; that stretch reads SSPSISSTTSP. The span at 527-537 shows a compositional bias: basic residues; that stretch reads ANRKKHRRKKS. The segment covering 538–549 has biased composition (polar residues); sequence TSNFKVDGLSST. Residues 612-732 enclose the Arf-GAP domain; that stretch reads ALALQSIRNL…LFLSPLPCRD (121 aa). Residues 627–650 form a C4-type zinc finger; sequence CVDCDAQSPDWASLNLGALMCIEC. 2 ANK repeats span residues 771–800 and 804–833; these read DRRTSLHLACRKGNVVLVQLLIWYGVDVMA and HGNTALAYAKQAVTSEVRELLLQYGCPDEQ. Low complexity predominate over residues 845-854; it reads KNNRNNNSNA. The segment at 845 to 864 is disordered; sequence KNNRNNNSNAGGSGLMPTLI.

This sequence belongs to the centaurin gamma-like family. In terms of assembly, homodimer. Interacts with several subunits of the AP-3 protein complex.

The protein localises to the cytoplasm. GTPase-activating protein. Directly and specifically regulates the adapter protein 3 (AP-3)-dependent trafficking of proteins in the endosomal-lysosomal system. The protein is Arf-GAP with GTPase, ANK repeat and PH domain-containing protein 1 (agap1) of Xenopus laevis (African clawed frog).